Here is a 192-residue protein sequence, read N- to C-terminus: Dynein axonemal light chain 1 (192 aa).

LRR repeat units follow at residues 49–70, 71–92, 94–115, and 116–137; these read NCER…NGLK, NLKI…EAVG, TLEE…HVMK, and KLKV…LKLA. The LRRCT domain maps to 150–192; it reads NPLEEKYSADGNWIEEATKRLPKLKKLDGNPVIKQEEETEGES.

Belongs to the dynein light chain LC1-type family. In terms of assembly, interacts with DNAH5, a outer arm dynein heavy chain. Interacts with tubulin located within the A-tubule of the outer doublets in a ATP-independent manner.

It localises to the cytoplasm. The protein localises to the cytoskeleton. The protein resides in the cilium axoneme. Its function is as follows. Part of the multisubunit axonemal ATPase complexes that generate the force for cilia motility and govern beat frequency. Component of the outer arm dynein (ODA). May be involved in a mechanosensory feedback mechanism controlling ODA activity based on external conformational cues by tethering the outer arm dynein heavy chain (DNAH5) to the microtubule within the axoneme. The protein is Dynein axonemal light chain 1 (dnal1) of Danio rerio (Zebrafish).